The sequence spans 908 residues: Metabotropic glutamate receptor 8 (908 aa).

A signal peptide spans 1–33 (MVCEGKRSASCPCFFLLTAKFYWILTMMQRTHS). Residues 34-583 (QEYAHSIRVD…IIKLEWHSPW (550 aa)) are Extracellular-facing. C64 and C106 are joined by a disulfide. N95 carries N-linked (GlcNAc...) asparagine glycosylation. Residues S156, 177–179 (AST), and Y227 contribute to the L-glutamate site. 7 disulfide bridges follow: C246–C534, C369–C384, C424–C431, C516–C535, C520–C538, C541–C553, and C556–C569. N298 carries N-linked (GlcNAc...) asparagine glycosylation. D309 lines the L-glutamate pocket. K401 is an L-glutamate binding site. N-linked (GlcNAc...) asparagine glycans are attached at residues N452 and N480. N565 carries an N-linked (GlcNAc...) asparagine glycan. A helical transmembrane segment spans residues 584-608 (AVVPVFVAILGIIATTFVIVTFVRY). Topologically, residues 609 to 620 (NDTPIVRASGRE) are cytoplasmic. A helical transmembrane segment spans residues 621-641 (LSYVLLTGIFLCYSITFLMIA). Over 642–647 (APDTII) the chain is Extracellular. Residues 648–668 (CSFRRVFLGLGMCFSYAALLT) traverse the membrane as a helical segment. The Cytoplasmic segment spans residues 669–695 (KTNRIHRIFEQGKKSVTAPKFISPASQ). A helical transmembrane segment spans residues 696-716 (LVITFSLISVQLLGVFVWFVV). Over 717-746 (DPPHIIIDYGEQRTLDPEKARGVLKCDISD) the chain is Extracellular. Residues 747–768 (LSLICSLGYSILLMVTCTVYAI) traverse the membrane as a helical segment. The Cytoplasmic portion of the chain corresponds to 769–781 (KTRGVPETFNEAK). Residues 782-803 (PIGFTMYTTCIIWLAFIPIFFG) traverse the membrane as a helical segment. Residues 804–818 (TAQSAEKMYIQTTTL) lie on the Extracellular side of the membrane. Residues 819–843 (TVSMSLSASVSLGMLYMPKVYIIIF) form a helical membrane-spanning segment. The Cytoplasmic segment spans residues 844–908 (HPEQNVQKRK…TYISYSNHSI (65 aa)). A Glycyl lysine isopeptide (Lys-Gly) (interchain with G-Cter in SUMO1) cross-link involves residue K882.

This sequence belongs to the G-protein coupled receptor 3 family. Interacts with PICK1.

Its subcellular location is the cell membrane. Functionally, G-protein coupled receptor for glutamate. Ligand binding causes a conformation change that triggers signaling via guanine nucleotide-binding proteins (G proteins) and modulates the activity of down-stream effectors, such as adenylate cyclase. Signaling inhibits adenylate cyclase activity. In Homo sapiens (Human), this protein is Metabotropic glutamate receptor 8 (GRM8).